The chain runs to 123 residues: Cholecystokinin (123 aa).

The N-terminal stretch at 1 to 19 (MNAGICVCVLLAALSTSSC) is a signal peptide. Residues 20–103 (LSLPAVSEDG…MGNNHRIKDR (84 aa)) constitute a propeptide that is removed on maturation. Positions 43–67 (HTRAAPSSGQLSLLSKAEDDEEPRS) are disordered. Tyrosine 105 is subject to Sulfotyrosine. Phenylalanine 111 carries the post-translational modification Phenylalanine amide. A propeptide spanning residues 115–123 (SAEEYEYSS) is cleaved from the precursor. Sulfotyrosine occurs at positions 119 and 121.

The protein belongs to the gastrin/cholecystokinin family. In terms of processing, the precursor is cleaved by proteases to produce a number of active cholecystokinins. As to expression, expressed in the ovary, kidney, gill, gastrointestinal tract and pituitary. Differentially expressed in the brain in the optic tectum-thalamus, hypothalamus, telencephalon, olfactory bulb and tract, preoptic region and posterior brain region. Expression is strongest in the hypothalamus, where localization is to the posterior ventrolateral region. Expression in the brain is transiently increased 2 hours after feeding. Abundant in the sensory layers of the vagal lobe and along the border of the sensory region of the lobe and the deep fiber laye. Also present in the facial lobe and throughout the glossopharyngeal lobe.

The protein resides in the secreted. Functionally, this peptide hormone induces gall bladder contraction and the release of pancreatic enzymes in the gut. Induces the secretion of gonadotropin and growth hormone from the pituitary. Suppresses food intake and decreases the expression of preprosomatostatin genes in the forebrain. The polypeptide is Cholecystokinin (cck) (Carassius auratus (Goldfish)).